The following is a 199-amino-acid chain: Alpha-D-glucose 1-phosphate phosphatase YihX (199 aa).

Asp6 functions as the Nucleophile in the catalytic mechanism. Mg(2+) is bound at residue Asp6. Residues Asp6–Gly8, Ser107–Asn108, Lys141, and Asp166 each bind substrate. Asp166 is a Mg(2+) binding site.

The protein belongs to the HAD-like hydrolase superfamily. YihX family. Requires Mg(2+) as cofactor. The cofactor is Mn(2+). It depends on Co(2+) as a cofactor. Zn(2+) is required as a cofactor.

It catalyses the reaction alpha-D-glucose 1-phosphate + H2O = D-glucose + phosphate. Functionally, catalyzes the dephosphorylation of alpha-D-glucose 1-phosphate (Glc1P) and, to a lesser extent, of other sugar phosphates. Has no activity with the beta form of Glc1P. In addition, YihX has significant phosphatase activity against pyridoxal phosphate (PLP) and low beta-phosphoglucomutase activity. This Escherichia coli (strain K12) protein is Alpha-D-glucose 1-phosphate phosphatase YihX (yihX).